A 367-amino-acid polypeptide reads, in one-letter code: Phosphoribosylaminoimidazole-succinocarboxamide synthase (367 aa).

It belongs to the SAICAR synthetase family.

It carries out the reaction 5-amino-1-(5-phospho-D-ribosyl)imidazole-4-carboxylate + L-aspartate + ATP = (2S)-2-[5-amino-1-(5-phospho-beta-D-ribosyl)imidazole-4-carboxamido]succinate + ADP + phosphate + 2 H(+). Its pathway is purine metabolism; IMP biosynthesis via de novo pathway; 5-amino-1-(5-phospho-D-ribosyl)imidazole-4-carboxamide from 5-amino-1-(5-phospho-D-ribosyl)imidazole-4-carboxylate: step 1/2. The polypeptide is Phosphoribosylaminoimidazole-succinocarboxamide synthase (Aliivibrio fischeri (strain ATCC 700601 / ES114) (Vibrio fischeri)).